Reading from the N-terminus, the 512-residue chain is Kynurenine 3-monooxygenase (512 aa).

Belongs to the aromatic-ring hydroxylase family. KMO subfamily. Requires FAD as cofactor.

The protein resides in the mitochondrion outer membrane. It catalyses the reaction L-kynurenine + NADPH + O2 + H(+) = 3-hydroxy-L-kynurenine + NADP(+) + H2O. It functions in the pathway cofactor biosynthesis; NAD(+) biosynthesis; quinolinate from L-kynurenine: step 1/3. In terms of biological role, catalyzes the hydroxylation of L-kynurenine (L-Kyn) to form 3-hydroxy-L-kynurenine (L-3OHKyn). Required for synthesis of quinolinic acid. This chain is Kynurenine 3-monooxygenase (bna4), found in Neosartorya fischeri (strain ATCC 1020 / DSM 3700 / CBS 544.65 / FGSC A1164 / JCM 1740 / NRRL 181 / WB 181) (Aspergillus fischerianus).